A 165-amino-acid chain; its full sequence is 3-isopropylmalate dehydratase small subunit (165 aa).

Belongs to the LeuD family. LeuD type 2 subfamily. As to quaternary structure, heterodimer of LeuC and LeuD.

The enzyme catalyses (2R,3S)-3-isopropylmalate = (2S)-2-isopropylmalate. It participates in amino-acid biosynthesis; L-leucine biosynthesis; L-leucine from 3-methyl-2-oxobutanoate: step 2/4. In terms of biological role, catalyzes the isomerization between 2-isopropylmalate and 3-isopropylmalate, via the formation of 2-isopropylmaleate. This Saccharolobus islandicus (strain M.16.27) (Sulfolobus islandicus) protein is 3-isopropylmalate dehydratase small subunit.